The following is a 137-amino-acid chain: Ribonuclease VapC3 (137 aa).

The PINc domain occupies 12 to 129 (VVVDASAMVD…LTTDERLARA (118 aa)). 2 residues coordinate Mg(2+): Asp15 and Asp105.

This sequence belongs to the PINc/VapC protein family. It depends on Mg(2+) as a cofactor.

Functionally, toxic component of a type II toxin-antitoxin (TA) system. An RNase. Its toxic effect is neutralized by coexpression with cognate antitoxin VapB3. The protein is Ribonuclease VapC3 of Mycobacterium tuberculosis (strain CDC 1551 / Oshkosh).